Reading from the N-terminus, the 126-residue chain is Aspartate 1-decarboxylase (126 aa).

S25 acts as the Schiff-base intermediate with substrate; via pyruvic acid in catalysis. Position 25 is a pyruvic acid (Ser) (S25). T57 lines the substrate pocket. Residue Y58 is the Proton donor of the active site. 73 to 75 (GAA) is a binding site for substrate.

It belongs to the PanD family. Heterooctamer of four alpha and four beta subunits. Pyruvate serves as cofactor. Is synthesized initially as an inactive proenzyme, which is activated by self-cleavage at a specific serine bond to produce a beta-subunit with a hydroxyl group at its C-terminus and an alpha-subunit with a pyruvoyl group at its N-terminus.

It is found in the cytoplasm. The catalysed reaction is L-aspartate + H(+) = beta-alanine + CO2. It participates in cofactor biosynthesis; (R)-pantothenate biosynthesis; beta-alanine from L-aspartate: step 1/1. In terms of biological role, catalyzes the pyruvoyl-dependent decarboxylation of aspartate to produce beta-alanine. The protein is Aspartate 1-decarboxylase of Yersinia pseudotuberculosis serotype IB (strain PB1/+).